The primary structure comprises 319 residues: tRNA dimethylallyltransferase (319 aa).

26–33 (GPTAAGKS) is an ATP binding site. 28–33 (TAAGKS) is a substrate binding site. The interval 51-54 (DSMQ) is interaction with substrate tRNA.

The protein belongs to the IPP transferase family. As to quaternary structure, monomer. Requires Mg(2+) as cofactor.

It carries out the reaction adenosine(37) in tRNA + dimethylallyl diphosphate = N(6)-dimethylallyladenosine(37) in tRNA + diphosphate. In terms of biological role, catalyzes the transfer of a dimethylallyl group onto the adenine at position 37 in tRNAs that read codons beginning with uridine, leading to the formation of N6-(dimethylallyl)adenosine (i(6)A). In Salinispora tropica (strain ATCC BAA-916 / DSM 44818 / JCM 13857 / NBRC 105044 / CNB-440), this protein is tRNA dimethylallyltransferase.